The chain runs to 154 residues: Spermatogenesis-associated protein 19, mitochondrial (154 aa).

A mitochondrion-targeting transit peptide spans 1–24 (MIITTWIVYILARKGAGLPFPPKV). S26 and S116 each carry phosphoserine.

The protein localises to the mitochondrion outer membrane. The protein resides in the mitochondrion. It localises to the cell projection. It is found in the cilium. Its subcellular location is the flagellum. Its function is as follows. Essential for sperm motility and male fertility. Plays an important role in sperm motility by regulating the organization and function of the mitochondria and is also required for correct sperm midpiece assembly. The protein is Spermatogenesis-associated protein 19, mitochondrial (SPATA19) of Bos taurus (Bovine).